A 236-amino-acid polypeptide reads, in one-letter code: Virion protein US10 homolog (236 aa).

The tract at residues 1 to 32 (MDGAYGHVHNGSPMAVDGEESGAGTGTGAGAD) is disordered. Positions 21–31 (SGAGTGTGAGA) are enriched in gly residues. The segment at 138-150 (CAYWCCLGHAFAC) is a zinc-finger region.

The protein belongs to the herpesviridae US10 family. Phosphorylated.

It localises to the virion tegument. The protein localises to the host nucleus matrix. The protein is Virion protein US10 homolog (IR5) of Equine herpesvirus 1 (strain Kentucky A) (EHV-1).